A 534-amino-acid chain; its full sequence is Glucose-6-phosphate isomerase (534 aa).

Glu-356 (proton donor) is an active-site residue. Catalysis depends on residues His-387 and Lys-502.

Belongs to the GPI family.

It localises to the cytoplasm. The enzyme catalyses alpha-D-glucose 6-phosphate = beta-D-fructose 6-phosphate. It participates in carbohydrate biosynthesis; gluconeogenesis. Its pathway is carbohydrate degradation; glycolysis; D-glyceraldehyde 3-phosphate and glycerone phosphate from D-glucose: step 2/4. In terms of biological role, catalyzes the reversible isomerization of glucose-6-phosphate to fructose-6-phosphate. This Desulfotalea psychrophila (strain LSv54 / DSM 12343) protein is Glucose-6-phosphate isomerase.